The primary structure comprises 220 residues: Glycerol-3-phosphate acyltransferase (220 aa).

6 helical membrane-spanning segments follow: residues 11–31 (INVI…GYAL), 70–90 (LLVL…SKLF), 96–116 (LQWM…FLNF), 127–147 (GSVV…WFFV), 153–173 (ISSL…FFVP), and 193–213 (MVLI…NLLA).

The protein belongs to the PlsY family. Probably interacts with PlsX.

It localises to the cell inner membrane. It carries out the reaction an acyl phosphate + sn-glycerol 3-phosphate = a 1-acyl-sn-glycero-3-phosphate + phosphate. It participates in lipid metabolism; phospholipid metabolism. Catalyzes the transfer of an acyl group from acyl-phosphate (acyl-PO(4)) to glycerol-3-phosphate (G3P) to form lysophosphatidic acid (LPA). This enzyme utilizes acyl-phosphate as fatty acyl donor, but not acyl-CoA or acyl-ACP. The chain is Glycerol-3-phosphate acyltransferase from Helicobacter pylori (strain ATCC 700392 / 26695) (Campylobacter pylori).